The chain runs to 179 residues: Large ribosomal subunit protein uL5 (179 aa).

Belongs to the universal ribosomal protein uL5 family. In terms of assembly, part of the 50S ribosomal subunit; part of the 5S rRNA/L5/L18/L25 subcomplex. Contacts the 5S rRNA and the P site tRNA. Forms a bridge to the 30S subunit in the 70S ribosome.

In terms of biological role, this is one of the proteins that bind and probably mediate the attachment of the 5S RNA into the large ribosomal subunit, where it forms part of the central protuberance. In the 70S ribosome it contacts protein S13 of the 30S subunit (bridge B1b), connecting the 2 subunits; this bridge is implicated in subunit movement. Contacts the P site tRNA; the 5S rRNA and some of its associated proteins might help stabilize positioning of ribosome-bound tRNAs. The protein is Large ribosomal subunit protein uL5 of Rickettsia typhi (strain ATCC VR-144 / Wilmington).